A 441-amino-acid polypeptide reads, in one-letter code: Importin subunit alpha-8 (441 aa).

ARM repeat units follow at residues Q39–V79, D80–G118, I121–R158, K160–E199, E202–A241, H244–A284, K287–L326, and H330–K370.

Belongs to the importin alpha family. In terms of assembly, forms a complex with importin subunit beta-1.

Its subcellular location is the nucleus envelope. Binds to conventional NLS motifs and mediates nuclear protein import across the nuclear envelope. The chain is Importin subunit alpha-8 from Arabidopsis thaliana (Mouse-ear cress).